Reading from the N-terminus, the 445-residue chain is Phospho-alpha-glucosidase PagL (445 aa).

4-71 (YSICIVGGGS…ELEEVIWTTD (68 aa)) contributes to the NAD(+) binding site. Substrate contacts are provided by Arg-94 and Asn-148. Cys-171 serves as a coordination point for Mn(2+). Asp-172 (proton donor) is an active-site residue. Residue His-201 participates in Mn(2+) binding. Tyr-264 serves as the catalytic Proton acceptor. Arg-284 contacts substrate.

It belongs to the glycosyl hydrolase 4 family. In terms of assembly, homotetramer. It depends on NAD(+) as a cofactor. Mn(2+) serves as cofactor.

Phospho-alpha-glucosidase that catalyzes the hydrolysis of p-nitrophenyl-alpha-D-glucopyranoside 6-phosphate, but is not able to cleave 'natural' phospho-alpha-glucosides produced via the phosphoenolpyruvate-dependent sugar phosphotransferase system (PEP-PTS). The chain is Phospho-alpha-glucosidase PagL (pagL) from Clostridium acetobutylicum (strain ATCC 824 / DSM 792 / JCM 1419 / IAM 19013 / LMG 5710 / NBRC 13948 / NRRL B-527 / VKM B-1787 / 2291 / W).